A 236-amino-acid chain; its full sequence is Leucyl/phenylalanyl-tRNA--protein transferase (236 aa).

It belongs to the L/F-transferase family.

It is found in the cytoplasm. It catalyses the reaction N-terminal L-lysyl-[protein] + L-leucyl-tRNA(Leu) = N-terminal L-leucyl-L-lysyl-[protein] + tRNA(Leu) + H(+). The catalysed reaction is N-terminal L-arginyl-[protein] + L-leucyl-tRNA(Leu) = N-terminal L-leucyl-L-arginyl-[protein] + tRNA(Leu) + H(+). The enzyme catalyses L-phenylalanyl-tRNA(Phe) + an N-terminal L-alpha-aminoacyl-[protein] = an N-terminal L-phenylalanyl-L-alpha-aminoacyl-[protein] + tRNA(Phe). Functions in the N-end rule pathway of protein degradation where it conjugates Leu, Phe and, less efficiently, Met from aminoacyl-tRNAs to the N-termini of proteins containing an N-terminal arginine or lysine. In Shewanella oneidensis (strain ATCC 700550 / JCM 31522 / CIP 106686 / LMG 19005 / NCIMB 14063 / MR-1), this protein is Leucyl/phenylalanyl-tRNA--protein transferase.